Consider the following 173-residue polypeptide: ATP synthase subunit delta (173 aa).

It belongs to the ATPase delta chain family. In terms of assembly, F-type ATPases have 2 components, F(1) - the catalytic core - and F(0) - the membrane proton channel. F(1) has five subunits: alpha(3), beta(3), gamma(1), delta(1), epsilon(1). F(0) has three main subunits: a(1), b(2) and c(10-14). The alpha and beta chains form an alternating ring which encloses part of the gamma chain. F(1) is attached to F(0) by a central stalk formed by the gamma and epsilon chains, while a peripheral stalk is formed by the delta and b chains.

Its subcellular location is the cell inner membrane. Its function is as follows. F(1)F(0) ATP synthase produces ATP from ADP in the presence of a proton or sodium gradient. F-type ATPases consist of two structural domains, F(1) containing the extramembraneous catalytic core and F(0) containing the membrane proton channel, linked together by a central stalk and a peripheral stalk. During catalysis, ATP synthesis in the catalytic domain of F(1) is coupled via a rotary mechanism of the central stalk subunits to proton translocation. This protein is part of the stalk that links CF(0) to CF(1). It either transmits conformational changes from CF(0) to CF(1) or is implicated in proton conduction. This chain is ATP synthase subunit delta, found in Campylobacter lari (strain RM2100 / D67 / ATCC BAA-1060).